The chain runs to 87 residues: Putative septation protein SpoVG (87 aa).

The protein belongs to the SpoVG family.

Functionally, could be involved in septation. This Agathobacter rectalis (strain ATCC 33656 / DSM 3377 / JCM 17463 / KCTC 5835 / VPI 0990) (Eubacterium rectale) protein is Putative septation protein SpoVG.